The chain runs to 209 residues: Orotate phosphoribosyltransferase (209 aa).

Residues R96, K100, H102, and 122–130 contribute to the 5-phospho-alpha-D-ribose 1-diphosphate site; that span reads EDLISTGGS. S126 contributes to the orotate binding site.

This sequence belongs to the purine/pyrimidine phosphoribosyltransferase family. PyrE subfamily. As to quaternary structure, homodimer. Mg(2+) is required as a cofactor.

It catalyses the reaction orotidine 5'-phosphate + diphosphate = orotate + 5-phospho-alpha-D-ribose 1-diphosphate. Its pathway is pyrimidine metabolism; UMP biosynthesis via de novo pathway; UMP from orotate: step 1/2. In terms of biological role, catalyzes the transfer of a ribosyl phosphate group from 5-phosphoribose 1-diphosphate to orotate, leading to the formation of orotidine monophosphate (OMP). The protein is Orotate phosphoribosyltransferase of Streptococcus pyogenes serotype M12 (strain MGAS2096).